Here is an 80-residue protein sequence, read N- to C-terminus: Exodeoxyribonuclease 7 small subunit (80 aa).

It belongs to the XseB family. In terms of assembly, heterooligomer composed of large and small subunits.

The protein resides in the cytoplasm. It carries out the reaction Exonucleolytic cleavage in either 5'- to 3'- or 3'- to 5'-direction to yield nucleoside 5'-phosphates.. Functionally, bidirectionally degrades single-stranded DNA into large acid-insoluble oligonucleotides, which are then degraded further into small acid-soluble oligonucleotides. This Rickettsia typhi (strain ATCC VR-144 / Wilmington) protein is Exodeoxyribonuclease 7 small subunit.